A 657-amino-acid chain; its full sequence is Conserved oligomeric Golgi complex subunit 6 (657 aa).

Low complexity predominate over residues 14-26 (SGAANGLSNGAGA). The interval 14–36 (SGAANGLSNGAGATPAQPNNPLS) is disordered.

It belongs to the COG6 family. In terms of assembly, component of the conserved oligomeric Golgi complex which is composed of eight different subunits and is required for normal Golgi morphology and localization.

It is found in the golgi apparatus membrane. Functionally, required for normal Golgi function. The chain is Conserved oligomeric Golgi complex subunit 6 (Cog6) from Rattus norvegicus (Rat).